Consider the following 372-residue polypeptide: N-methyl-L-tryptophan oxidase (372 aa).

An FAD-binding site is contributed by 4–34 (DLIIIGSGSVGAAAGYYATRAGLNVLMTDAH). Cys-308 bears the S-8alpha-FAD cysteine mark.

Belongs to the MSOX/MTOX family. MTOX subfamily. As to quaternary structure, monomer. The cofactor is FAD.

It carries out the reaction N(alpha)-methyl-L-tryptophan + O2 + H2O = L-tryptophan + formaldehyde + H2O2. Functionally, catalyzes the oxidative demethylation of N-methyl-L-tryptophan. The sequence is that of N-methyl-L-tryptophan oxidase from Escherichia coli O157:H7.